We begin with the raw amino-acid sequence, 341 residues long: Glyceraldehyde-3-phosphate dehydrogenase 3.1 (341 aa).

NAD(+) contacts are provided by residues 13 to 14, Asp35, and Arg85; that span reads RI. D-glyceraldehyde 3-phosphate contacts are provided by residues 157–159, Thr188, 217–218, and Arg240; these read SCT and TG. The Nucleophile role is filled by Cys158. Asn322 provides a ligand contact to NAD(+).

The protein belongs to the glyceraldehyde-3-phosphate dehydrogenase family. As to quaternary structure, homotetramer.

The protein localises to the cytoplasm. It carries out the reaction D-glyceraldehyde 3-phosphate + phosphate + NAD(+) = (2R)-3-phospho-glyceroyl phosphate + NADH + H(+). It participates in carbohydrate degradation; glycolysis; pyruvate from D-glyceraldehyde 3-phosphate: step 1/5. This is Glyceraldehyde-3-phosphate dehydrogenase 3.1 from Caenorhabditis briggsae.